A 447-amino-acid chain; its full sequence is Cytochrome c biogenesis protein CcsB (447 aa).

3 consecutive transmembrane segments (helical) span residues 28–48, 87–107, and 173–193; these read LRLAIILLLLIAIFSISGTVI, TWWYLSLLILFGSSLTACTFR, and IGPIIVHAAMLIILAGAIWGA.

The protein belongs to the Ccs1/CcsB family. In terms of assembly, may interact with CcsA.

The protein localises to the cellular thylakoid membrane. Its function is as follows. Required during biogenesis of c-type cytochromes (cytochrome c6 and cytochrome f) at the step of heme attachment. In Microcystis aeruginosa (strain NIES-843 / IAM M-2473), this protein is Cytochrome c biogenesis protein CcsB.